Consider the following 72-residue polypeptide: MFHCPKCHHAAHARTSRYLTENTKERYHQCQNINCSCTFMTMETIERFIVTPGAIDPAPPHPTVGGQRPLWL.

The protein is Late control gene B protein (B) of Escherichia phage 186 (Bacteriophage 186).